We begin with the raw amino-acid sequence, 65 residues long: Large ribosomal subunit protein uL29 (65 aa).

This sequence belongs to the universal ribosomal protein uL29 family.

The polypeptide is Large ribosomal subunit protein uL29 (rpmC) (Borreliella burgdorferi (strain ATCC 35210 / DSM 4680 / CIP 102532 / B31) (Borrelia burgdorferi)).